A 156-amino-acid chain; its full sequence is Holliday junction resolvase (156 aa).

It belongs to the RuvC family. Poxviruses-type subfamily. Requires Mg(2+) as cofactor.

Functionally, nuclease that specifically cleaves and resolves four-way DNA Holliday junctions into linear duplex products. The sequence is that of Holliday junction resolvase from Vertebrata (FPV).